A 109-amino-acid chain; its full sequence is Large ribosomal subunit protein P1C (109 aa).

Residues 68–83 (ASAPTAAGAGAAAPAE) show a composition bias toward low complexity. A disordered region spans residues 68-109 (ASAPTAAGAGAAAPAEAAEEEKKEEAKEEEESDEDMGFGLFD). Positions 94–103 (KEEEESDEDM) are enriched in acidic residues. A Phosphoserine modification is found at serine 99.

This sequence belongs to the eukaryotic ribosomal protein P1/P2 family. As to quaternary structure, component of the large ribosomal subunit (LSU). Mature yeast ribosomes consist of a small (40S) and a large (60S) subunit. The 40S small subunit contains 1 molecule of ribosomal RNA (18S rRNA) and at least 33 different proteins. The large 60S subunit contains 3 rRNA molecules (25S, 5.8S and 5S rRNA) and at least 46 different proteins. The acidic ribosomal P-proteins form the stalk structure of the 60S subunit. They are organized as a pentameric complex in which uL10/P0 interacts with 2 heterodimers of P1 and P2 proteins.

It localises to the cytoplasm. Functionally, component of the ribosome, a large ribonucleoprotein complex responsible for the synthesis of proteins in the cell. The small ribosomal subunit (SSU) binds messenger RNAs (mRNAs) and translates the encoded message by selecting cognate aminoacyl-transfer RNA (tRNA) molecules. The large subunit (LSU) contains the ribosomal catalytic site termed the peptidyl transferase center (PTC), which catalyzes the formation of peptide bonds, thereby polymerizing the amino acids delivered by tRNAs into a polypeptide chain. The nascent polypeptides leave the ribosome through a tunnel in the LSU and interact with protein factors that function in enzymatic processing, targeting, and the membrane insertion of nascent chains at the exit of the ribosomal tunnel. This is Large ribosomal subunit protein P1C (rpp103) from Schizosaccharomyces pombe (strain 972 / ATCC 24843) (Fission yeast).